Here is a 104-residue protein sequence, read N- to C-terminus: Large ribosomal subunit protein uL24 (104 aa).

This sequence belongs to the universal ribosomal protein uL24 family. Part of the 50S ribosomal subunit. In terms of processing, a methylated and unmethylated form are thought to exist.

One of two assembly initiator proteins, it binds directly to the 5'-end of the 23S rRNA, where it nucleates assembly of the 50S subunit. In terms of biological role, one of the proteins that surrounds the polypeptide exit tunnel on the outside of the subunit. The protein is Large ribosomal subunit protein uL24 of Rhodopseudomonas palustris (strain ATCC BAA-98 / CGA009).